Consider the following 315-residue polypeptide: Transaldolase (315 aa).

Lys131 serves as the catalytic Schiff-base intermediate with substrate.

Belongs to the transaldolase family. Type 1 subfamily. In terms of assembly, homodimer.

It localises to the cytoplasm. The catalysed reaction is D-sedoheptulose 7-phosphate + D-glyceraldehyde 3-phosphate = D-erythrose 4-phosphate + beta-D-fructose 6-phosphate. It functions in the pathway carbohydrate degradation; pentose phosphate pathway; D-glyceraldehyde 3-phosphate and beta-D-fructose 6-phosphate from D-ribose 5-phosphate and D-xylulose 5-phosphate (non-oxidative stage): step 2/3. Functionally, transaldolase is important for the balance of metabolites in the pentose-phosphate pathway. The protein is Transaldolase of Haemophilus ducreyi (strain 35000HP / ATCC 700724).